A 172-amino-acid polypeptide reads, in one-letter code: Myosin regulatory light chain RLC-A (172 aa).

Residues 1–16 show a composition bias toward basic residues; the sequence is MSSKRAKTKTTKKRPQ. The tract at residues 1–20 is disordered; it reads MSSKRAKTKTTKKRPQRATS. Thr-19 carries the post-translational modification Phosphothreonine; by MLCK. At Ser-20 the chain carries Phosphoserine; by MLCK. EF-hand domains lie at 29-64, 98-133, and 134-169; these read SQIQEFKEAFNMIDQNRDGFIDKEDLHDMLASMGKN, DPEDVIRNAFACFDEEAIGTIQEDYLRELLTTMGDR, and FTDEEVDELYREAPIDKKGNFNYIEFTRILKHGAKD. Asp-42, Asn-44, Asp-46, and Asp-53 together coordinate Ca(2+).

As to quaternary structure, myosin is a hexamer of 2 heavy chains and 4 light chains. Phosphorylation increases the actin-activated myosin ATPase activity and thereby regulates the contractile activity.

Functionally, myosin regulatory subunit that plays an important role in regulation of both smooth muscle and nonmuscle cell contractile activity via its phosphorylation. Implicated in cytokinesis, receptor capping, and cell locomotion. In Rattus norvegicus (Rat), this protein is Myosin regulatory light chain RLC-A (Rlc-a).